Consider the following 61-residue polypeptide: uncharacterized protein (61 aa).

2 helical membrane passes run Phe7–Phe24 and Val29–Leu48.

The protein resides in the cell membrane. This is an uncharacterized protein from Bacillus subtilis (strain 168).